We begin with the raw amino-acid sequence, 298 residues long: 4-nitrophenylphosphatase (298 aa).

Homodimer. Post-translationally, the N-terminus is blocked.

It carries out the reaction 4-nitrophenyl phosphate + H2O = 4-nitrophenol + phosphate + H(+). Activity enhanced by Mg(2+) ion but inhibited by Zn(2+) ion. The sequence is that of 4-nitrophenylphosphatase (pho2) from Schizosaccharomyces pombe (strain 972 / ATCC 24843) (Fission yeast).